The following is a 255-amino-acid chain: Hydroxyacylglutathione hydrolase (255 aa).

H56, H58, D60, H61, H114, D133, and H171 together coordinate Zn(2+).

This sequence belongs to the metallo-beta-lactamase superfamily. Glyoxalase II family. In terms of assembly, monomer. Requires Zn(2+) as cofactor.

It catalyses the reaction an S-(2-hydroxyacyl)glutathione + H2O = a 2-hydroxy carboxylate + glutathione + H(+). It participates in secondary metabolite metabolism; methylglyoxal degradation; (R)-lactate from methylglyoxal: step 2/2. Functionally, thiolesterase that catalyzes the hydrolysis of S-D-lactoyl-glutathione to form glutathione and D-lactic acid. The sequence is that of Hydroxyacylglutathione hydrolase from Roseobacter denitrificans (strain ATCC 33942 / OCh 114) (Erythrobacter sp. (strain OCh 114)).